Reading from the N-terminus, the 585-residue chain is Arginine--tRNA ligase (585 aa).

The 'HIGH' region signature appears at P126–H136.

Belongs to the class-I aminoacyl-tRNA synthetase family. Monomer.

It localises to the cytoplasm. It carries out the reaction tRNA(Arg) + L-arginine + ATP = L-arginyl-tRNA(Arg) + AMP + diphosphate. The polypeptide is Arginine--tRNA ligase (Picosynechococcus sp. (strain ATCC 27264 / PCC 7002 / PR-6) (Agmenellum quadruplicatum)).